The following is a 110-amino-acid chain: UPF0122 protein gbs1018 (110 aa).

Belongs to the UPF0122 family.

Functionally, might take part in the signal recognition particle (SRP) pathway. This is inferred from the conservation of its genetic proximity to ftsY/ffh. May be a regulatory protein. The protein is UPF0122 protein gbs1018 of Streptococcus agalactiae serotype III (strain NEM316).